Here is a 179-residue protein sequence, read N- to C-terminus: Large ribosomal subunit protein uL6 (179 aa).

Belongs to the universal ribosomal protein uL6 family. As to quaternary structure, part of the 50S ribosomal subunit.

Its function is as follows. This protein binds to the 23S rRNA, and is important in its secondary structure. It is located near the subunit interface in the base of the L7/L12 stalk, and near the tRNA binding site of the peptidyltransferase center. This chain is Large ribosomal subunit protein uL6, found in Pelodictyon phaeoclathratiforme (strain DSM 5477 / BU-1).